The following is a 215-amino-acid chain: Adenylate kinase (215 aa).

An ATP-binding site is contributed by glycine 10–threonine 15. The tract at residues serine 30–valine 59 is NMP. AMP-binding positions include threonine 31, arginine 36, glutamine 57 to valine 59, glycine 85 to arginine 88, and glutamine 92. Residues glycine 126–aspartate 163 are LID. Arginine 127 is a binding site for ATP. Cysteine 130 and cysteine 133 together coordinate Zn(2+). Residue valine 136 to tyrosine 137 participates in ATP binding. Residues cysteine 150 and cysteine 153 each contribute to the Zn(2+) site. Arginine 160 and arginine 171 together coordinate AMP. Arginine 199 is a binding site for ATP.

The protein belongs to the adenylate kinase family. Monomer.

It is found in the cytoplasm. It carries out the reaction AMP + ATP = 2 ADP. It participates in purine metabolism; AMP biosynthesis via salvage pathway; AMP from ADP: step 1/1. Functionally, catalyzes the reversible transfer of the terminal phosphate group between ATP and AMP. Plays an important role in cellular energy homeostasis and in adenine nucleotide metabolism. This Syntrophomonas wolfei subsp. wolfei (strain DSM 2245B / Goettingen) protein is Adenylate kinase.